The primary structure comprises 312 residues: Malate dehydrogenase (312 aa).

NAD(+) contacts are provided by residues 7 to 13 and D34; that span reads GAAGGIG. Substrate-binding residues include R81 and R87. NAD(+) is bound by residues N94 and 117-119; that span reads ITN. Substrate contacts are provided by N119 and R153. The active-site Proton acceptor is H177. Residue M227 participates in NAD(+) binding.

Belongs to the LDH/MDH superfamily. MDH type 1 family. Homodimer.

It catalyses the reaction (S)-malate + NAD(+) = oxaloacetate + NADH + H(+). In terms of biological role, catalyzes the reversible oxidation of malate to oxaloacetate. This Enterobacter sp. (strain 638) protein is Malate dehydrogenase.